We begin with the raw amino-acid sequence, 312 residues long: Acetylglutamate kinase (312 aa).

Substrate-binding positions include 77–78 (GG), arginine 99, and asparagine 192.

It belongs to the acetylglutamate kinase family. ArgB subfamily.

The protein resides in the cytoplasm. It catalyses the reaction N-acetyl-L-glutamate + ATP = N-acetyl-L-glutamyl 5-phosphate + ADP. The protein operates within amino-acid biosynthesis; L-arginine biosynthesis; N(2)-acetyl-L-ornithine from L-glutamate: step 2/4. Catalyzes the ATP-dependent phosphorylation of N-acetyl-L-glutamate. This Synechococcus sp. (strain JA-2-3B'a(2-13)) (Cyanobacteria bacterium Yellowstone B-Prime) protein is Acetylglutamate kinase.